The chain runs to 293 residues: Ribosomal RNA small subunit methyltransferase A (293 aa).

S-adenosyl-L-methionine is bound by residues Asn-29, Leu-31, Gly-56, Glu-77, Asp-102, and Asn-127.

It belongs to the class I-like SAM-binding methyltransferase superfamily. rRNA adenine N(6)-methyltransferase family. RsmA subfamily.

The protein resides in the cytoplasm. It carries out the reaction adenosine(1518)/adenosine(1519) in 16S rRNA + 4 S-adenosyl-L-methionine = N(6)-dimethyladenosine(1518)/N(6)-dimethyladenosine(1519) in 16S rRNA + 4 S-adenosyl-L-homocysteine + 4 H(+). Its function is as follows. Specifically dimethylates two adjacent adenosines (A1518 and A1519) in the loop of a conserved hairpin near the 3'-end of 16S rRNA in the 30S particle. May play a critical role in biogenesis of 30S subunits. This chain is Ribosomal RNA small subunit methyltransferase A, found in Geobacillus thermodenitrificans (strain NG80-2).